A 338-amino-acid chain; its full sequence is MAEISILGAGGLTGKELLLLFSRQKEHEVVHITSDKLAGKTISEVFPEVSFPKNLVFKKHEDIVPLKSLVVLAVPNEVSVESAPKFLDAGHKVIDLSGVYRLHNQEILEKYYKLKHTRFNYINRAVFGIPEIFRDQLKNADFVSNPGCFSTSVILPIFLLGQLRKNLRPRIIVDSKSGVSGAGGRTEDSGYSYTSVYENFRAYKILSHQHEPEIREYVYSKSGLSDPEVIFTPHLLPVYRGILSTIVLEFDSEPEQDLISILENSSLNEPFIRILKTPEEIELKKVQHTNFLDISLRKRGNTLVVVSALDNLVKGAAGQALQNINLMTGAKETLGLLP.

The active site involves Cys148.

Belongs to the NAGSA dehydrogenase family. Type 1 subfamily.

It localises to the cytoplasm. It carries out the reaction N-acetyl-L-glutamate 5-semialdehyde + phosphate + NADP(+) = N-acetyl-L-glutamyl 5-phosphate + NADPH + H(+). The protein operates within amino-acid biosynthesis; L-arginine biosynthesis; N(2)-acetyl-L-ornithine from L-glutamate: step 3/4. Functionally, catalyzes the NADPH-dependent reduction of N-acetyl-5-glutamyl phosphate to yield N-acetyl-L-glutamate 5-semialdehyde. This Leptospira interrogans serogroup Icterohaemorrhagiae serovar copenhageni (strain Fiocruz L1-130) protein is N-acetyl-gamma-glutamyl-phosphate reductase.